The sequence spans 26 residues: PRKCH upstream open reading frame 2 (26 aa).

As to quaternary structure, interacts with protein kinase C eta as well as other protein kinases including PRKCD, PRKCQ and PRKCE but not with PRKCG or PRKCZ; the interactions lead to inhibition of kinase activity.

Functionally, product of an upstream open reading frame (ORF) of PRKCH which regulates translation of the downstream protein kinase C eta (PKC-eta) ORF. Functions as a repressive element that maintains low basal levels of PKC-eta in growing cells but enhances its expression during stress conditions induced by amino acid starvation in a EIF2AK4/GCN2-dependent manner. In addition to its role in regulating PKC-eta translation, also inhibits the kinase activity of PKC-eta as well as other protein kinases including PRKCD, PRKCQ and PRKCE but not PRKCA, PRKCG or PRKCZ. The chain is PRKCH upstream open reading frame 2 from Homo sapiens (Human).